The primary structure comprises 257 residues: UPF0246 protein swp_3736 (257 aa).

It belongs to the UPF0246 family.

This chain is UPF0246 protein swp_3736, found in Shewanella piezotolerans (strain WP3 / JCM 13877).